Consider the following 273-residue polypeptide: Putative pyruvate, phosphate dikinase regulatory protein (273 aa).

An ADP-binding site is contributed by 149–156 (GPSRTSKT).

This sequence belongs to the pyruvate, phosphate/water dikinase regulatory protein family. PDRP subfamily.

It catalyses the reaction N(tele)-phospho-L-histidyl/L-threonyl-[pyruvate, phosphate dikinase] + ADP = N(tele)-phospho-L-histidyl/O-phospho-L-threonyl-[pyruvate, phosphate dikinase] + AMP + H(+). The enzyme catalyses N(tele)-phospho-L-histidyl/O-phospho-L-threonyl-[pyruvate, phosphate dikinase] + phosphate + H(+) = N(tele)-phospho-L-histidyl/L-threonyl-[pyruvate, phosphate dikinase] + diphosphate. Functionally, bifunctional serine/threonine kinase and phosphorylase involved in the regulation of the pyruvate, phosphate dikinase (PPDK) by catalyzing its phosphorylation/dephosphorylation. The chain is Putative pyruvate, phosphate dikinase regulatory protein from Rickettsia prowazekii (strain Madrid E).